Here is a 418-residue protein sequence, read N- to C-terminus: FXa-directed anticoagulant (418 aa).

The N-terminal stretch at 1–19 is a signal peptide; that stretch reads MNLKIAIIVICQLVYFTQG. N-linked (GlcNAc...) asparagine glycans are attached at residues Asn-117, Asn-167, and Asn-286.

This sequence belongs to the serpin family. In terms of assembly, interacts with host coagulation factor X/F10 (activated). In terms of tissue distribution, female salivary gland (at protein level).

The protein localises to the secreted. Anticoagulant and antithrombotic serpin-type protein inhibiting host coagulation factor Xa (F10). Does not inhibit host uPA/urokinase-type plasminogen activator (PLAU), kallikrein, granzyme B (GZMB), matriptase, elastase, alpha-chymotrypsin, chymase, coagulation factor XIIa (F12), coagulation factor XIa (F11), plasmin (PLG), thrombin (F2), trypsin and cathepsin G (CTSG). Inhibits factor Xa-induced production of pro-inflammatory cytokines, such as MCP-1/CCL2, TNF-alpha/TNF, IL-1beta/IL1B, IL6, IL8/CXCL8 and IL18, in human endothelial cells. Inhibits factor Xa-induced up-regulation of protease-activated receptors (PARs) F2R, F2RL1 and F2RL2 in human endothelial cells. Prevents activation of host F2RL1 via inhibition of F2RL1 cleavage by host factor Xa. Inhibits factor Xa-induced up-regulation of adhesion molecules ICAM1 and VCAM1 in human endothelial cells. Inhibits factor Xa-induced up-regulation of phosphorylated ERK1/2 in human endothelial cells. Inhibits factor Xa-induced activation of transcription factor NF-kappa-B in human endothelial cells. Reduces factor Xa-induced edema in the host. Reduces factor Xa-induced endothelial permeability in the host. The polypeptide is FXa-directed anticoagulant (Aedes albopictus (Asian tiger mosquito)).